The chain runs to 422 residues: Adenylosuccinate synthetase (422 aa).

GTP contacts are provided by residues 11-17 (GDEGKGK) and 39-41 (GHT). Catalysis depends on Asp-12, which acts as the Proton acceptor. 2 residues coordinate Mg(2+): Asp-12 and Gly-39. IMP is bound by residues 12–15 (DEGK), 37–40 (NAGH), Thr-129, Arg-143, Asn-219, Thr-234, and Arg-298. The active-site Proton donor is His-40. 294-300 (VTTGRRR) contacts substrate. GTP-binding positions include Arg-300, 326 to 328 (KLD), and 409 to 411 (GTG).

Belongs to the adenylosuccinate synthetase family. In terms of assembly, homodimer. Mg(2+) is required as a cofactor.

Its subcellular location is the cytoplasm. It carries out the reaction IMP + L-aspartate + GTP = N(6)-(1,2-dicarboxyethyl)-AMP + GDP + phosphate + 2 H(+). It participates in purine metabolism; AMP biosynthesis via de novo pathway; AMP from IMP: step 1/2. Functionally, plays an important role in the de novo pathway and in the salvage pathway of purine nucleotide biosynthesis. Catalyzes the first committed step in the biosynthesis of AMP from IMP. The sequence is that of Adenylosuccinate synthetase from Ajellomyces capsulatus (strain H143) (Darling's disease fungus).